Consider the following 150-residue polypeptide: U1 small nuclear ribonucleoprotein C (150 aa).

Residues tyrosine 4–aspartate 36 form a Matrin-type zinc finger. The segment at serine 66 to tyrosine 132 is disordered. Residues aspartate 80–lysine 92 show a composition bias toward basic and acidic residues. Acidic residues predominate over residues asparagine 103–methionine 112. A compositionally biased stretch (pro residues) spans leucine 115 to alanine 130.

Belongs to the U1 small nuclear ribonucleoprotein C family. As to quaternary structure, U1 snRNP is composed of the 7 core Sm proteins B/B', D1, D2, D3, E, F and G that assemble in a heptameric protein ring on the Sm site of the small nuclear RNA to form the core snRNP, and at least 3 U1 snRNP-specific proteins U1-70K, U1-A and U1-C. U1-C interacts with U1 snRNA and the 5' splice-site region of the pre-mRNA.

It localises to the nucleus. Functionally, component of the spliceosomal U1 snRNP, which is essential for recognition of the pre-mRNA 5' splice-site and the subsequent assembly of the spliceosome. U1-C is directly involved in initial 5' splice-site recognition for both constitutive and regulated alternative splicing. The interaction with the 5' splice-site seems to precede base-pairing between the pre-mRNA and the U1 snRNA. Stimulates commitment or early (E) complex formation by stabilizing the base pairing of the 5' end of the U1 snRNA and the 5' splice-site region. The chain is U1 small nuclear ribonucleoprotein C from Candida albicans (strain SC5314 / ATCC MYA-2876) (Yeast).